Here is a 67-residue protein sequence, read N- to C-terminus: DNA-directed RNA polymerase subunit omega (67 aa).

The protein belongs to the RNA polymerase subunit omega family. As to quaternary structure, the RNAP catalytic core consists of 2 alpha, 1 beta, 1 beta' and 1 omega subunit. When a sigma factor is associated with the core the holoenzyme is formed, which can initiate transcription.

The catalysed reaction is RNA(n) + a ribonucleoside 5'-triphosphate = RNA(n+1) + diphosphate. Functionally, promotes RNA polymerase assembly. Latches the N- and C-terminal regions of the beta' subunit thereby facilitating its interaction with the beta and alpha subunits. In Ralstonia pickettii (strain 12J), this protein is DNA-directed RNA polymerase subunit omega.